The sequence spans 2057 residues: MADGSPRPPLYRSVSFKLLERWSGGPGPREEDADTPGLRRRASCRPAAAVPGQPSRRVSKLASGPPAAPAQPRPLRSLSPSVRQLSRRFDAAGLDDDSTGTRDGGCSSGTTEEAAEGSERGAWPSVTEMRKLFGGPSSRRPSMDSEALGSTSPDRVSWEPPTRDPRQPPTPPPRTCFPLAGLRSARPLSGPGIEGRRRRQHQQQERAQRPADGLHSWHSFSQPQAGARASSSSSIASSYPVSRSRAASSSEEEEEGPQSQLGPQSPAYLGGHSSGSDEDPNGEDGRRWRGRGLRPGRSQLVHGCSQDSDELNPGGLGSAGGVGSPEPPTSPRTSMDEWGTGTQPCLPGPQESLRPMSDTGGAPFRVAKVSFPAYLASPAGSRGSSRYSSTETLKDDDLWSSRSSVGWGVYRSPSFGTGDGLLLRPQTRSRSKGPVGTARPLRDGGLDLDKNRQRKSLSNPDIASETLTLLSFLRSDLSELRVRKPSGGPGNRPLDGRDSPSAGSPMEQSESTLSQSPTSPTTRPTLKDLTATLRRAKSFSCSEKPMARRLLRTSALKPSSSELLLAGSGAEEDPLPLVVQDQYVQEARQVFEKIQRMGAQQDDGNDVCPTSPDWAGDMTQGHRSQEELSGPESNLTDEGIGADPEPLGAAFCSLDPAGVWRPLSSTSAQTNHHLGAGTEDSLGGRALVSPETPPTPGALRRRRKVPPSGPNGTELSNGEASEAYRSLSDPIPQRHRAATSEEPSGFSVDSNLLGSLNSKTGLPVTPAMDEGLTSGHSDWSVVSEENKDYQEVIQSIVQGPGALGRMGEDRIAGKTPKKKSLSDPSRRGELTGPGFEGPGGEPIREVEPMLPPSSSEPILAEQWTEPEDPAPARGRAQSERSLPAPPASSTAHHDFHLDPKLTSVLSPRLTRRGSKKRPARSSHQELRREEGNQDQTGSLTQTRSSSKHVRHASVPATFTPIVVPEPAMSVGPPVAAPEPVGFPVRGHPALQAPSLEDVTKRYMLTLHSGDVPAPGPVDLPCLPPSAPPSTETKPSGAARATPDEPAPASKCCSKPQVDMRKHVTMTLLDTEQSYVESLRTLMQGYMQPLKQPENSLLCDPSLVDEIFDQIPELLEHHEQFLEQVRHCVQTWHAQQKVGALLVQSFSKDVLVNIYSAYIDNFLNAKDAVRVAKEARPAFLKFLEQSMRENKEKQALSDLMIKPVQRIPRYELLVKDLLKHTPEDHPDHPLLLDAQRNIKQVAERINKGVRSAEEAERHARVLQEIEAHIEGMEDLQAPLRRFLRQEMVIEVKAIGGKKDRSLFLFTDLIVCTTLKRKSGSLRRSSMSLYTAASVIDTASKYKMLWKLPLEDTDIIKGASQATNRETIQKAISRLDEDLATLGQMSKLSESLGFPHQSLDDALRDLSAAMHRDLSEKQALCCSLAFPPTKLELCATRPEGTDSYIFEFPHPDARLGFEQAFDEAKRKLASSKSCLDPEFLKAIPIMKTRSGMQFSCAAPTFSSCPEPAPEVWVCNSDGYVGQVCLLSLRAEPDVEACIAVCSARILCIGAVPGLQPRCPREQPEPLRNPPETTLESTGPELDVEATAEEEAATTLAEPGPQPCLHISISGSGLEMEPGPAKGDPQPELVPFDSDSDDESSPSPSGTLQSQASQSTISSSFGNEETPSSKEATAETTSSEEEQEPGFLSLSGSFGPGGPCGTSPMDGRALRRSSRGSFTRGSLEDLLSVDPEAYQSSVWLGTEDGCVHVYQSSDSIRDRRNSMKLQHAASVTCILYLNNKVFVSLANGELVVYQREAGRFWDPQNFKSMTLGSQGSPITKMVSVGGRLWCGCQNRVLVLSPDTLQLEHTFYVGQDSSRSVACMVDSSLGVWVTLKGSAHVCLYHPDTFEQLAEVDVTPPVHRMLAGSDAIIRQHKAACLRITALLVCAELLWVGTSAGVVLTIPTSPSTVSCPRAPLSPAGLCQGHTGHVRFLAAVQLPEGFNLLCSTPPPPPDTGPEKLPSLDHRDSPRRRGPTSARPKMLVISGGDGSEDFRLSSGGGGSSETVGRDDSTNHLLLWRV.

3 disordered regions span residues 20 to 361 (ERWS…DTGG), 375 to 461 (LASP…SNPD), and 481 to 559 (RVRK…LKPS). Residues S142 and S152 each carry the phosphoserine modification. The segment covering 227–249 (ARASSSSSIASSYPVSRSRAASS) has biased composition (low complexity). 2 positions are modified to phosphoserine: S305 and S308. A compositionally biased stretch (gly residues) spans 314–323 (GGLGSAGGVG). S324, S330, S377, S381, S389, S404, and S414 each carry phosphoserine. The segment covering 382–391 (RGSSRYSSTE) has biased composition (polar residues). Over residues 440–451 (PLRDGGLDLDKN) the composition is skewed to basic and acidic residues. The residue at position 456 (S456) is a Phosphoserine. Over residues 507-524 (EQSESTLSQSPTSPTTRP) the composition is skewed to low complexity. Residues S538 and S611 each carry the phosphoserine modification. Disordered regions lie at residues 615–647 (AGDMTQGHRSQEELSGPESNLTDEGIGADPEPL) and 663–952 (LSST…VRHA). The span at 663–672 (LSSTSAQTNH) shows a compositional bias: polar residues. S689 is subject to Phosphoserine. Residues T692 and T695 each carry the phosphothreonine modification. The segment covering 710–719 (PNGTELSNGE) has biased composition (polar residues). A Phosphoserine modification is found at S728. A compositionally biased stretch (polar residues) spans 747-760 (SVDSNLLGSLNSKT). A compositionally biased stretch (basic and acidic residues) spans 820–829 (SLSDPSRRGE). S906 bears the Phosphoserine mark. Residues 909–920 (LTRRGSKKRPAR) show a composition bias toward basic residues. The segment covering 922–931 (SHQELRREEG) has biased composition (basic and acidic residues). A compositionally biased stretch (polar residues) spans 933–944 (QDQTGSLTQTRS). A phosphoserine mark is found at S953 and S994. Pro residues predominate over residues 1015–1027 (GPVDLPCLPPSAP). The interval 1015–1054 (GPVDLPCLPPSAPPSTETKPSGAARATPDEPAPASKCCSK) is disordered. The DH domain maps to 1059 to 1247 (MRKHVTMTLL…KQVAERINKG (189 aa)). At S1324 the chain carries Phosphoserine. 2 disordered regions span residues 1555-1713 (RCPR…SSRG) and 1983-2050 (CSTP…DSTN). The span at 1579–1589 (LDVEATAEEEA) shows a compositional bias: acidic residues. The segment covering 1638–1674 (SPSPSGTLQSQASQSTISSSFGNEETPSSKEATAETT) has biased composition (low complexity).

Functionally, acts as a guanine nucleotide exchange factor (GEF) for RhoA GTPases. In Mus musculus (Mouse), this protein is Rho guanine nucleotide exchange factor 17 (Arhgef17).